The sequence spans 150 residues: 3-dehydroquinate dehydratase (150 aa).

Residue Tyr-25 is the Proton acceptor of the active site. The substrate site is built by Asn-76, His-82, and Asp-89. Catalysis depends on His-102, which acts as the Proton donor. Residues 103 to 104 and Arg-113 each bind substrate; that span reads LS.

Belongs to the type-II 3-dehydroquinase family. Homododecamer.

It carries out the reaction 3-dehydroquinate = 3-dehydroshikimate + H2O. Its pathway is metabolic intermediate biosynthesis; chorismate biosynthesis; chorismate from D-erythrose 4-phosphate and phosphoenolpyruvate: step 3/7. Its function is as follows. Catalyzes a trans-dehydration via an enolate intermediate. This is 3-dehydroquinate dehydratase from Trichodesmium erythraeum (strain IMS101).